The chain runs to 277 residues: Zaragozic acid A biosynthesis cluster protein 1 (277 aa).

Its pathway is secondary metabolite biosynthesis. Part of the gene cluster that mediates the biosynthesis of squalestatin S1 (SQS1, also known as zaragozic acid A), a heavily oxidized fungal polyketide that offers potent cholesterol lowering activity by targeting squalene synthase (SS). SQS1 is composed of a 2,8-dioxobicyclic[3.2.1]octane-3,4,5-tricarboxyclic acid core that is connected to two lipophilic polyketide arms. These initial steps feature the priming of an unusual benzoic acid starter unit onto the highly reducing polyketide synthase clz14, followed by oxaloacetate extension and product release to generate a tricarboxylic acid containing product. The phenylalanine ammonia lyase (PAL) clz10 and the acyl-CoA ligase clz12 are involved in transforming phenylalanine into benzoyl-CoA. The citrate synthase-like protein clz17 is involved in connecting the C-alpha-carbons of the hexaketide chain and oxaloacetate to afford the tricarboxylic acid unit. The potential hydrolytic enzymes, clz11 and clz13, are in close proximity to pks2 and may participate in product release. On the other side, the tetraketide arm is synthesized by a the squalestatin tetraketide synthase clz2 and enzymatically esterified to the core in the last biosynthetic step, by the acetyltransferase clz6. The biosynthesis of the tetraketide must involve 3 rounds of chain extension. After the first and second rounds methyl-transfer occurs, and in all rounds of extension the ketoreductase and dehydratase are active. The enoyl reductase and C-MeT of clz2 are not active in the final round of extension. The acetyltransferase clz6 appears to have a broad substrate selectivity for its acyl CoA substrate, allowing the in vitro synthesis of novel squalestatins. The biosynthesis of SQS1 requires several oxidative steps likely performed by oxidoreductases clz3, clz15 and clz16. Finally, in support of the identification of the cluster as being responsible for SQS1 production, the cluster contains a gene encoding a putative squalene synthase (SS) clz20, suggesting a likely mechanism for self-resistance. The protein is Zaragozic acid A biosynthesis cluster protein 1 of Cochliobolus lunatus (Filamentous fungus).